The chain runs to 613 residues: Transcription factor cbf11 (613 aa).

The interval 32–58 (NNGLHNQEDGAGGRNENSERVGSGSPG) is disordered.

It belongs to the Su(H) family.

It is found in the cytoplasm. The protein resides in the nucleus. Functionally, transcription factor that behaves as a negative regulator of adhesion. Recognizes specifically the canonical CSL response element GTGA/GGAA. May also play a cbf12-antagonistic role in the regulation of a number of other important processes such as extracellular material production, colony morphogenesis, ploidy maintenance, or meiosis. The protein is Transcription factor cbf11 (cbf11) of Schizosaccharomyces pombe (strain 972 / ATCC 24843) (Fission yeast).